The chain runs to 556 residues: Glutamine--tRNA ligase (556 aa).

The 'HIGH' region signature appears at 34 to 44; it reads PEPNGYLHIGH. Residues 35-37 and 41-47 each bind ATP; these read EPN and HIGHAKS. Positions 67 and 212 each coordinate L-glutamine. ATP is bound by residues threonine 231, 263-264, and 271-273; these read RL and MSK. Residues 270 to 274 carry the 'KMSKS' region motif; the sequence is VMSKR.

It belongs to the class-I aminoacyl-tRNA synthetase family. In terms of assembly, monomer.

Its subcellular location is the cytoplasm. It carries out the reaction tRNA(Gln) + L-glutamine + ATP = L-glutaminyl-tRNA(Gln) + AMP + diphosphate. This chain is Glutamine--tRNA ligase, found in Nitrosomonas europaea (strain ATCC 19718 / CIP 103999 / KCTC 2705 / NBRC 14298).